Here is a 952-residue protein sequence, read N- to C-terminus: Ubiquitin carboxyl-terminal hydrolase 15 (952 aa).

Ala2 carries the N-acetylalanine modification. A mediates interaction with SART3 region spans residues 2–223 (AEGGAADLDI…KNEDGTWPRG (222 aa)). The region spanning 7-118 (ADLDIQRSDI…GQEPIARKVV (112 aa)) is the DUSP domain. Residue Thr226 is modified to Phosphothreonine. The region spanning 260–904 (CGLSNLGNTC…AAYVLFYQRQ (645 aa)) is the USP domain. The Nucleophile role is filled by Cys269. At Thr573 the chain carries Phosphothreonine. Positions 598–666 (TEGSLHCCKD…GDNDSENGLC (69 aa)) are disordered. A compositionally biased stretch (acidic residues) spans 627–644 (METDEPDDESSQDQELPS). The active-site Proton acceptor is His862. Residues 923 to 952 (SAATGIPLESDEDSNDNDNDIENENCMHTN) are disordered. Positions 931-945 (ESDEDSNDNDNDIEN) are enriched in acidic residues. Ser932 and Ser936 each carry phosphoserine.

This sequence belongs to the peptidase C19 family. As to quaternary structure, a homodimer structure has been reported; however it is unclear whether the protein form a homodimer in vivo. Identified in a complex with the COP9 signalosome complex (CSN). Interacts with SMAD1, SMAD2 and SMAD3; the interaction is direct. Forms a complex with SMURF2 and SMAD7. Interacts with TGFBR1. Interacts with SART3; the interaction is direct. May interact with RNF20 and RNF40. May interact with PRKN. Interacts with INCA1. In terms of processing, phosphorylated. Phosphorylation protects against ubiquitination and subsequent degradation by the proteasome. Ubiquitinated, leading to degradation by the proteasome.

Its subcellular location is the cytoplasm. It localises to the nucleus. It is found in the mitochondrion. The catalysed reaction is Thiol-dependent hydrolysis of ester, thioester, amide, peptide and isopeptide bonds formed by the C-terminal Gly of ubiquitin (a 76-residue protein attached to proteins as an intracellular targeting signal).. Functionally, hydrolase that removes conjugated ubiquitin from target proteins and regulates various pathways such as the TGF-beta receptor signaling, NF-kappa-B and RNF41/NRDP1-PRKN pathways. Acts as a key regulator of TGF-beta receptor signaling pathway, but the precise mechanism is still unclear: according to a report, acts by promoting deubiquitination of monoubiquitinated R-SMADs (SMAD1, SMAD2 and/or SMAD3), thereby alleviating inhibition of R-SMADs and promoting activation of TGF-beta target genes. According to another reports, regulates the TGF-beta receptor signaling pathway by mediating deubiquitination and stabilization of TGFBR1, leading to an enhanced TGF-beta signal. Able to mediate deubiquitination of monoubiquitinated substrates, 'Lys-27'-, 'Lys-48'- and 'Lys-63'-linked polyubiquitin chains. May also regulate gene expression and/or DNA repair through the deubiquitination of histone H2B. Acts as an inhibitor of mitophagy by counteracting the action of parkin (PRKN): hydrolyzes cleavage of 'Lys-48'- and 'Lys-63'-linked polyubiquitin chains attached by parkin on target proteins such as MFN2, thereby reducing parkin's ability to drive mitophagy. Acts as an associated component of COP9 signalosome complex (CSN) and regulates different pathways via this association: regulates NF-kappa-B by mediating deubiquitination of NFKBIA and deubiquitinates substrates bound to VCP. Involved in endosome organization by mediating deubiquitination of SQSTM1: ubiquitinated SQSTM1 forms a molecular bridge that restrains cognate vesicles in the perinuclear region and its deubiquitination releases target vesicles for fast transport into the cell periphery. Acts as a negative regulator of antifungal immunity by mediating 'Lys-27'-linked deubiquitination of CARD9, thereby inactivating CARD9. The sequence is that of Ubiquitin carboxyl-terminal hydrolase 15 (USP15) from Bos taurus (Bovine).